Reading from the N-terminus, the 66-residue chain is MKADELRKLDNEQLRAKLKDCYEELFNLRFQQVMGKLTATGRPRMVRRDIARIKTILRERELGIES.

The protein belongs to the universal ribosomal protein uL29 family.

This Roseiflexus castenholzii (strain DSM 13941 / HLO8) protein is Large ribosomal subunit protein uL29.